A 258-amino-acid chain; its full sequence is Acyl-[acyl-carrier-protein]--UDP-N-acetylglucosamine O-acyltransferase (258 aa).

Belongs to the transferase hexapeptide repeat family. LpxA subfamily. Homotrimer.

It is found in the cytoplasm. The enzyme catalyses a (3R)-hydroxyacyl-[ACP] + UDP-N-acetyl-alpha-D-glucosamine = a UDP-3-O-[(3R)-3-hydroxyacyl]-N-acetyl-alpha-D-glucosamine + holo-[ACP]. Its pathway is glycolipid biosynthesis; lipid IV(A) biosynthesis; lipid IV(A) from (3R)-3-hydroxytetradecanoyl-[acyl-carrier-protein] and UDP-N-acetyl-alpha-D-glucosamine: step 1/6. Involved in the biosynthesis of lipid A, a phosphorylated glycolipid that anchors the lipopolysaccharide to the outer membrane of the cell. The chain is Acyl-[acyl-carrier-protein]--UDP-N-acetylglucosamine O-acyltransferase from Pseudomonas fluorescens (strain Pf0-1).